We begin with the raw amino-acid sequence, 384 residues long: 8-amino-7-oxononanoate synthase (384 aa).

Arginine 21 is a binding site for substrate. 108 to 109 is a pyridoxal 5'-phosphate binding site; it reads GF. Histidine 133 contacts substrate. Serine 179, histidine 207, and threonine 233 together coordinate pyridoxal 5'-phosphate. Lysine 236 carries the post-translational modification N6-(pyridoxal phosphate)lysine. Threonine 352 is a substrate binding site.

Belongs to the class-II pyridoxal-phosphate-dependent aminotransferase family. BioF subfamily. In terms of assembly, homodimer. Pyridoxal 5'-phosphate is required as a cofactor.

It carries out the reaction 6-carboxyhexanoyl-[ACP] + L-alanine + H(+) = (8S)-8-amino-7-oxononanoate + holo-[ACP] + CO2. Its pathway is cofactor biosynthesis; biotin biosynthesis. Functionally, catalyzes the decarboxylative condensation of pimeloyl-[acyl-carrier protein] and L-alanine to produce 8-amino-7-oxononanoate (AON), [acyl-carrier protein], and carbon dioxide. The chain is 8-amino-7-oxononanoate synthase from Escherichia coli O6:K15:H31 (strain 536 / UPEC).